A 269-amino-acid chain; its full sequence is Protein SirB1 (269 aa).

It belongs to the UPF0162 family.

In terms of biological role, required for maximal expression of sirC, not required to invade host cells. This Salmonella typhi protein is Protein SirB1 (sirB1).